A 324-amino-acid polypeptide reads, in one-letter code: Cytochrome c biogenesis protein CcsA (324 aa).

Helical transmembrane passes span 17–37 (IISV…IPAL), 44–64 (GMIA…IYSG), 68–88 (LSNL…IHMI), 99–119 (YLSA…TSGL), 145–165 (MLLS…LLVI), 230–250 (VISI…VWAN), 264–278 (TWAF…IYSH), and 291–311 (AIVA…VNLL).

Belongs to the CcmF/CycK/Ccl1/NrfE/CcsA family. In terms of assembly, may interact with Ccs1.

Its subcellular location is the plastid. The protein localises to the chloroplast thylakoid membrane. Required during biogenesis of c-type cytochromes (cytochrome c6 and cytochrome f) at the step of heme attachment. The protein is Cytochrome c biogenesis protein CcsA of Lemna minor (Common duckweed).